We begin with the raw amino-acid sequence, 735 residues long: Phosphoribosylformylglycinamidine synthase subunit PurL (735 aa).

Residue histidine 49 is part of the active site. Positions 52 and 91 each coordinate ATP. Glutamate 93 serves as a coordination point for Mg(2+). Substrate contacts are provided by residues 94–97 (SHNH) and arginine 116. Histidine 95 functions as the Proton acceptor in the catalytic mechanism. Aspartate 117 contacts Mg(2+). Substrate is bound at residue glutamine 240. Aspartate 268 serves as a coordination point for Mg(2+). 312–314 (ESQ) contributes to the substrate binding site. Residues aspartate 493 and glycine 530 each contribute to the ATP site. Asparagine 531 serves as a coordination point for Mg(2+). Serine 533 contributes to the substrate binding site.

It belongs to the FGAMS family. In terms of assembly, monomer. Part of the FGAM synthase complex composed of 1 PurL, 1 PurQ and 2 PurS subunits.

It localises to the cytoplasm. The catalysed reaction is N(2)-formyl-N(1)-(5-phospho-beta-D-ribosyl)glycinamide + L-glutamine + ATP + H2O = 2-formamido-N(1)-(5-O-phospho-beta-D-ribosyl)acetamidine + L-glutamate + ADP + phosphate + H(+). Its pathway is purine metabolism; IMP biosynthesis via de novo pathway; 5-amino-1-(5-phospho-D-ribosyl)imidazole from N(2)-formyl-N(1)-(5-phospho-D-ribosyl)glycinamide: step 1/2. Functionally, part of the phosphoribosylformylglycinamidine synthase complex involved in the purines biosynthetic pathway. Catalyzes the ATP-dependent conversion of formylglycinamide ribonucleotide (FGAR) and glutamine to yield formylglycinamidine ribonucleotide (FGAM) and glutamate. The FGAM synthase complex is composed of three subunits. PurQ produces an ammonia molecule by converting glutamine to glutamate. PurL transfers the ammonia molecule to FGAR to form FGAM in an ATP-dependent manner. PurS interacts with PurQ and PurL and is thought to assist in the transfer of the ammonia molecule from PurQ to PurL. The protein is Phosphoribosylformylglycinamidine synthase subunit PurL of Methylocella silvestris (strain DSM 15510 / CIP 108128 / LMG 27833 / NCIMB 13906 / BL2).